We begin with the raw amino-acid sequence, 210 residues long: Cytochrome c biogenesis ATP-binding export protein CcmA (210 aa).

The ABC transporter domain maps to 3–205; the sequence is LHLQAAGLAC…KPSGYRELNL (203 aa). 37–44 is a binding site for ATP; the sequence is GPNGSGKT.

Belongs to the ABC transporter superfamily. CcmA exporter (TC 3.A.1.107) family. The complex is composed of two ATP-binding proteins (CcmA) and two transmembrane proteins (CcmB).

Its subcellular location is the cell inner membrane. The catalysed reaction is heme b(in) + ATP + H2O = heme b(out) + ADP + phosphate + H(+). In terms of biological role, part of the ABC transporter complex CcmAB involved in the biogenesis of c-type cytochromes; once thought to export heme, this seems not to be the case, but its exact role is uncertain. Responsible for energy coupling to the transport system. The chain is Cytochrome c biogenesis ATP-binding export protein CcmA from Pseudomonas putida (strain ATCC 47054 / DSM 6125 / CFBP 8728 / NCIMB 11950 / KT2440).